The primary structure comprises 336 residues: Cell division protein ZipA (336 aa).

Residues 1–2 (ME) lie on the Periplasmic side of the membrane. The helical transmembrane segment at 3-23 (LHILFFILAGLLIAVLISFSL) threads the bilayer. At 24-336 (WSARREKSRI…SRQSYLARVS (313 aa)) the chain is on the cytoplasmic side. Residues 56 to 77 (PSLNPQSYAQTTGQHGETEADN) form a disordered region. The segment covering 59–70 (NPQSYAQTTGQH) has biased composition (polar residues).

Belongs to the ZipA family. Interacts with FtsZ via their C-terminal domains.

Its subcellular location is the cell inner membrane. Functionally, essential cell division protein that stabilizes the FtsZ protofilaments by cross-linking them and that serves as a cytoplasmic membrane anchor for the Z ring. Also required for the recruitment to the septal ring of downstream cell division proteins. The sequence is that of Cell division protein ZipA from Actinobacillus pleuropneumoniae serotype 3 (strain JL03).